We begin with the raw amino-acid sequence, 197 residues long: Dephospho-CoA kinase (197 aa).

One can recognise a DPCK domain in the interval 3 to 197 (VLGLTGSIGL…IDELRGQRGS (195 aa)). 11-16 (GLGKST) provides a ligand contact to ATP.

This sequence belongs to the CoaE family.

The protein resides in the cytoplasm. The enzyme catalyses 3'-dephospho-CoA + ATP = ADP + CoA + H(+). It functions in the pathway cofactor biosynthesis; coenzyme A biosynthesis; CoA from (R)-pantothenate: step 5/5. In terms of biological role, catalyzes the phosphorylation of the 3'-hydroxyl group of dephosphocoenzyme A to form coenzyme A. The protein is Dephospho-CoA kinase of Mesorhizobium japonicum (strain LMG 29417 / CECT 9101 / MAFF 303099) (Mesorhizobium loti (strain MAFF 303099)).